The primary structure comprises 231 residues: Type 3 secretion system stator protein (231 aa).

In terms of assembly, the core secretion machinery of the T3SS is composed of approximately 20 different proteins, including cytoplasmic components, a base, an export apparatus and a needle. This subunit is part of the cytosolic complex. Interacts directly with Spa47/SctN (T3SS ATPase) and Spa33/SctQ (the major sorting platform component). Homodimer in solution.

It is found in the cytoplasm. Component of the type III secretion system (T3SS), also called injectisome, which is used to inject bacterial effector proteins into eukaryotic host cells. Acts as a regulator of the Spa47/SctN ATPase activity. It down-regulates the ATPase activity of the oligomeric Spa47/SctN, while it up-regulates the activity of the monomeric form. Important for translocation of MxiH/SctF, the major needle component. In Shigella flexneri, this protein is Type 3 secretion system stator protein.